The primary structure comprises 423 residues: Dihydroorotase-like protein (423 aa).

It belongs to the metallo-dependent hydrolases superfamily. DHOase family. PyrC' subfamily. In terms of assembly, heterododecamer of 6 active PyrB subunits and 6 non-catalytic PyrC' subunits.

In terms of biological role, non-functional DHOase. This is Dihydroorotase-like protein (pyrC') from Pseudomonas aeruginosa (strain ATCC 15692 / DSM 22644 / CIP 104116 / JCM 14847 / LMG 12228 / 1C / PRS 101 / PAO1).